Reading from the N-terminus, the 380-residue chain is DNA replication and repair protein RecF (380 aa).

Residue glycine 30–serine 37 coordinates ATP.

The protein belongs to the RecF family.

It is found in the cytoplasm. The RecF protein is involved in DNA metabolism; it is required for DNA replication and normal SOS inducibility. RecF binds preferentially to single-stranded, linear DNA. It also seems to bind ATP. The polypeptide is DNA replication and repair protein RecF (Rippkaea orientalis (strain PCC 8801 / RF-1) (Cyanothece sp. (strain PCC 8801))).